The following is a 311-amino-acid chain: E3 ubiquitin-protein ligase RNF126 (311 aa).

Zn(2+) is bound by residues Cys-13, Cys-16, Cys-29, and Cys-32. The C4-type zinc-finger motif lies at 13–32; sequence CHSCTAEIIPRLPEYTCPRC. 2 disordered regions span residues 42-62 and 95-133; these read ETRN…NRPS and GTSG…RRAA. A compositionally biased stretch (basic and acidic residues) spans 101–114; the sequence is EEPRDGESRREHQS. The segment covering 123-133 has biased composition (basic residues); sequence PRARLSTRRAA. The RING-type zinc finger occupies 227–268; that stretch reads CPVCKEDYTVGESVRQLPCNHLFHNDCIIPWLEQHDTCPVCR. Residues 274-311 form a disordered region; that stretch reads QNTATNPPGLTEMTFSSSSTSSSSSTSPTDENNAANNS. The span at 289-300 shows a compositional bias: low complexity; sequence SSSSTSSSSSTS. A compositionally biased stretch (polar residues) spans 301-311; sequence PTDENNAANNS.

It localises to the cytoplasm. Its subcellular location is the nucleus. The enzyme catalyses S-ubiquitinyl-[E2 ubiquitin-conjugating enzyme]-L-cysteine + [acceptor protein]-L-lysine = [E2 ubiquitin-conjugating enzyme]-L-cysteine + N(6)-ubiquitinyl-[acceptor protein]-L-lysine.. It functions in the pathway protein modification; protein ubiquitination. In terms of biological role, E3 ubiquitin-protein ligase that mediates ubiquitination oF target proteins. Depending on the associated E2 ligase, mediates 'Lys-27'-, 'Lys-29'-, 'Lys-48'- and/or 'Lys-63'-linked polyubiquitination of substrates. Part of a BAG6-dependent quality control process ensuring that proteins of the secretory pathway that are mislocalized to the cytosol are degraded by the proteasome. Probably acts by providing the ubiquitin ligase activity associated with the BAG6 complex and be responsible for ubiquitination of the hydrophobic mislocalized proteins and their targeting to the proteasome. This is E3 ubiquitin-protein ligase RNF126 from Xenopus tropicalis (Western clawed frog).